Here is a 103-residue protein sequence, read N- to C-terminus: Small ribosomal subunit protein bS18c (103 aa).

It belongs to the bacterial ribosomal protein bS18 family. Part of the 30S ribosomal subunit.

The protein resides in the plastid. The protein localises to the chloroplast. The sequence is that of Small ribosomal subunit protein bS18c from Buxus microphylla (Littleleaf boxwood).